The following is a 314-amino-acid chain: MIOREX complex component 8 (314 aa).

Residues 132 to 312 (TLPEVIFLGG…RYVIFQSCGL (181 aa)) enclose the EngB-type G domain. GTP-binding positions include 140–147 (GGTNVGKS), 173–177 (GFTKT), 191–194 (DSPG), 253–256 (TKMD), and 290–292 (SST). Mg(2+)-binding residues include serine 147 and threonine 175.

It belongs to the TRAFAC class TrmE-Era-EngA-EngB-Septin-like GTPase superfamily. EngB GTPase family. Associates with the mitochondrial ribosome. Mg(2+) is required as a cofactor. Post-translationally, sumoylated upon ethanol stress.

The protein resides in the mitochondrion. Component of MIOREX complexes, large expressome-like assemblies of ribosomes with factors involved in all the steps of post-transcriptional gene expression. In Saccharomyces cerevisiae (strain ATCC 204508 / S288c) (Baker's yeast), this protein is MIOREX complex component 8.